A 251-amino-acid chain; its full sequence is Aliphatic sulfonates import ATP-binding protein SsuB (251 aa).

An ABC transporter domain is found at 3–231 (VSINEVSKYF…PRNKTSQSFQ (229 aa)). 39-46 (GPSGCGKS) contacts ATP.

It belongs to the ABC transporter superfamily. Aliphatic sulfonates importer (TC 3.A.1.17.2) family. In terms of assembly, the complex is composed of two ATP-binding proteins (SsuB), two transmembrane proteins (SsuC) and a solute-binding protein (SsuA).

The protein resides in the cell membrane. It catalyses the reaction ATP + H2O + aliphatic sulfonate-[sulfonate-binding protein]Side 1 = ADP + phosphate + aliphatic sulfonateSide 2 + [sulfonate-binding protein]Side 1.. Part of the ABC transporter complex SsuABC involved in aliphatic sulfonates import. Responsible for energy coupling to the transport system. The protein is Aliphatic sulfonates import ATP-binding protein SsuB of Bacillus thuringiensis subsp. konkukian (strain 97-27).